The primary structure comprises 898 residues: Sodium/hydrogen exchanger 5 (898 aa).

Residues M1 to R3 lie on the Cytoplasmic side of the membrane. A helical transmembrane segment spans residues V4–T24. The Extracellular portion of the chain corresponds to Q25–E47. A helical transmembrane segment spans residues A48–L68. The Cytoplasmic segment spans residues S69–L75. The helical transmembrane segment at V76 to V96 threads the bilayer. The Extracellular portion of the chain corresponds to A97–A136. A helical membrane pass occupies residues I137–W157. Over G158 to D175 the chain is Cytoplasmic. A helical transmembrane segment spans residues F176–E196. Topologically, residues E197 to E202 are extracellular. N201 carries an N-linked (GlcNAc...) asparagine glycan. A helical transmembrane segment spans residues T203–Y223. Topologically, residues K224–S248 are cytoplasmic. Residues L249–L269 traverse the membrane as a helical segment. Residues T270–R278 lie on the Extracellular side of the membrane. The chain crosses the membrane as a helical span at residues I279 to A299. Topologically, residues S300–T333 are cytoplasmic. A helical transmembrane segment spans residues M334–V354. Residues D355–D362 are Extracellular-facing. Residues S363–L383 form a helical membrane-spanning segment. The Cytoplasmic segment spans residues Q384–D400. Residues Q401–L421 form a helical membrane-spanning segment. At D422–D430 the chain is on the extracellular side. The helical transmembrane segment at Y431 to I451 threads the bilayer. The Cytoplasmic portion of the chain corresponds to K452–L898. Disordered stretches follow at residues T660–G692 and E801–W888. Residues S662–K674 are compositionally biased toward basic residues. Polar residues predominate over residues E856–L867.

It belongs to the monovalent cation:proton antiporter 1 (CPA1) transporter (TC 2.A.36) family. Interacts with CHP1 and CHP2. Interacts with ARRB2; facilitates the endocytosis of SLC9A5 from the plasma membrane. Interacts with RACK1; this interaction positively regulates SLC9A5 activity and promotes SLC9A5 localization to focal adhesions. Interacts with SCAMP2; this interaction regulates SLC9A5 cell-surface targeting and SLC9A5 activity. Post-translationally, phosphorylated by PRKAA2; promotes its accumulation at the cell surface. Phosphorylated by CSNK2A1 in a manner favoring its beta-arrestin binding and endocytosis. Highly expressed in brain. Strongly expressed in the dentate gyrus.

Its subcellular location is the cell membrane. It is found in the recycling endosome membrane. The protein resides in the cell projection. The protein localises to the dendritic spine membrane. It localises to the synaptic cell membrane. Its subcellular location is the cell junction. It is found in the focal adhesion. The catalysed reaction is Na(+)(in) + H(+)(out) = Na(+)(out) + H(+)(in). In terms of biological role, plasma membrane Na(+)/H(+) antiporter. Mediates the electroneutral exchange of intracellular H(+) ions for extracellular Na(+) in 1:1 stoichiometry. Responsible for regulating intracellular pH homeostasis, in particular in neural tissues. Acts as a negative regulator of dendritic spine growth. Plays a role in postsynaptic remodeling and signaling. Can also contribute to organellar pH regulation, with consequences for receptor tyrosine kinase trafficking. The protein is Sodium/hydrogen exchanger 5 (Slc9a5) of Rattus norvegicus (Rat).